Reading from the N-terminus, the 1254-residue chain is Structural polyprotein (1254 aa).

Residues M1 to F33 are necessary for nucleocapsid assembly and virus assembly. Residues F33–K68 form a host transcription inhibition region. A Supraphysiological nuclear export signal motif is present at residues L41–L48. The segment at L48–M119 is disordered. Positions K64 to K68 match the Nuclear localization signal motif. 2 stretches are compositionally biased toward basic residues: residues N79–T93 and G102–M117. A binding to the viral RNA region spans residues K91–T126. A Phosphothreonine modification is found at T93. The tract at residues P111–K125 is ribosome-binding. Position 123 is a phosphoserine (S123). One can recognise a Peptidase S3 domain in the interval K125 to W274. T126 is modified (phosphothreonine). H151 serves as the catalytic Charge relay system. The segment at K167 to Y172 is interaction with spike glycoprotein E2. Active-site charge relay system residues include D173 and S225. An interaction with spike glycoprotein E2 region spans residues E259–T263. The tract at residues S275 to V286 is functions as an uncleaved signal peptide for the precursor of protein E3/E2. The Extracellular portion of the chain corresponds to S275–T700. Disulfide bonds link C281–C290, C352–C456, C355–C360, C423–C437, C484–C599, C533–C559, and C535–C553. Residue N285 is glycosylated (N-linked (GlcNAc...) asparagine; by host). A glycan (N-linked (GlcNAc...) asparagine; by host) is linked at N651. A helical membrane pass occupies residues I701–L721. Topologically, residues F722–A756 are cytoplasmic. The interval K724–S728 is interaction with the capsid protein. S-palmitoyl cysteine; by host attachment occurs at residues C729, C749, and C750. The interval C729–C749 is transient transmembrane before p62-6K protein processing. A disulfide bridge connects residues C729 and C750. The Extracellular portion of the chain corresponds to E757 to Q771. The next 2 membrane-spanning stretches (helical) occupy residues Q772–R790 and L791–G811. At A812–S1224 the chain is on the extracellular side. Cystine bridges form between C861–C926, C874–C906, C875–C908, and C880–C890. The E1 fusion peptide loop stretch occupies residues V896–T913. N-linked (GlcNAc...) asparagine; by host glycans are attached at residues N946 and N1082. Cystine bridges form between C1071–C1083, C1113–C1188, C1118–C1192, and C1140–C1182. The helical transmembrane segment at L1225 to M1245 threads the bilayer. At Y1246–N1254 the chain is on the cytoplasmic side.

Homodimer. Homomultimer. Interacts with host karyopherin KPNA4; this interaction allows the nuclear import of the viral capsid protein. Interacts with spike glycoprotein E2. Interacts with host IRAK1; the interaction leads to inhibition of IRAK1-dependent signaling. Part of a tetrameric complex composed of host CRM1, host importin alpha/beta dimer and the viral capsid; this complex blocks the receptor-mediated transport through the nuclear pore. Interacts with host phosphatase PPP1CA; this interaction dephosphorylates the capsid protein, which increases its ability to bind to the viral genome. In terms of assembly, the precursor of protein E3/E2 and E1 form a heterodimer shortly after synthesis. As to quaternary structure, interacts with spike glycoprotein E2. The precursor of protein E3/E2 and E1 form a heterodimer shortly after synthesis. Processing of the precursor of protein E3/E2 into E2 and E3 results in a heterodimer of the spike glycoproteins E2 and E1. Spike at virion surface are constituted of three E2-E1 heterodimers. After target cell attachment and endocytosis, E1 change conformation to form homotrimers. Interacts with 6K protein. Interacts with host LDLRAD3; this interaction mediates viral entry to the host cell. Interacts with spike glycoprotein E1. Processing of the precursor of protein E3/E2 into E2 and E3 results in a heterodimer of the spike glycoproteins E2 and E1. Spike at virion surface are constituted of a trimer of E2-E1 heterodimers. Interacts with 6K protein. Interacts with host LDLRAD3; this interaction mediates viral entry to the host cell. In terms of assembly, oligomer. Interacts with spike glycoprotein E1. Interacts with spike glycoprotein E2. Post-translationally, structural polyprotein: Specific enzymatic cleavages in vivo yield mature proteins. Capsid protein is auto-cleaved during polyprotein translation, unmasking a signal peptide at the N-terminus of the precursor of E3/E2. The remaining polyprotein is then targeted to the host endoplasmic reticulum, where host signal peptidase cleaves it into pE2, 6K and E1 proteins. pE2 is further processed to mature E3 and E2 by host furin in trans-Golgi vesicle. Phosphorylated on serine and threonine residues. In terms of processing, palmitoylated via thioester bonds. These palmitoylations may induce disruption of the C-terminus transmembrane. This would result in the reorientation of E2 C-terminus from lumenal to cytoplasmic side. Post-translationally, N-glycosylated. Palmitoylated via thioester bonds.

The protein resides in the virion. It localises to the host cytoplasm. Its subcellular location is the host cell membrane. The protein localises to the host nucleus. It is found in the virion membrane. The protein resides in the host Golgi apparatus. It localises to the host trans-Golgi network. Its subcellular location is the host endoplasmic reticulum. It carries out the reaction Autocatalytic release of the core protein from the N-terminus of the togavirus structural polyprotein by hydrolysis of a -Trp-|-Ser- bond.. In terms of biological role, forms an icosahedral capsid with a T=4 symmetry composed of 240 copies of the capsid protein surrounded by a lipid membrane through which penetrate 80 spikes composed of trimers of E1-E2 heterodimers. The capsid protein binds to the viral RNA genome at a site adjacent to a ribosome binding site for viral genome translation following genome release. Possesses a protease activity that results in its autocatalytic cleavage from the nascent structural protein. Following its self-cleavage, the capsid protein transiently associates with ribosomes, and within several minutes the protein binds to viral RNA and rapidly assembles into icosahedric core particles. The resulting nucleocapsid eventually associates with the cytoplasmic domain of the spike glycoprotein E2 at the cell membrane, leading to budding and formation of mature virions. In case of infection, new virions attach to target cells and after clathrin-mediated endocytosis their membrane fuses with the host endosomal membrane. This leads to the release of the nucleocapsid into the cytoplasm, followed by an uncoating event necessary for the genomic RNA to become accessible. The uncoating might be triggered by the interaction of capsid proteins with ribosomes. Binding of ribosomes would release the genomic RNA since the same region is genomic RNA-binding and ribosome-binding. Specifically inhibits interleukin-1 receptor-associated kinase 1/IRAK1-dependent signaling during viral entry, representing a means by which the alphaviruses may evade innate immune detection and activation prior to viral gene expression. Inhibits host transcription. Forms a tetrameric complex with XPO1/CRM1 and the nuclear import receptor importin. This complex blocks the central channel of host nuclear pores thereby inhibiting the receptor-mediated nuclear transport and thus the host mRNA and rRNA transcription. The inhibition of transcription is linked to a cytopathic effect on the host cell. Its function is as follows. Provides the signal sequence for the translocation of the precursor of protein E3/E2 to the host endoplasmic reticulum. Furin-cleaved E3 remains associated with spike glycoprotein E1 and mediates pH protection of the latter during the transport via the secretory pathway. After virion release from the host cell, the assembly protein E3 is gradually released in the extracellular space. Plays a role in viral attachment to target host cell, by binding to the cell receptor LDLRAD3. Synthesized as a p62 precursor which is processed by furin at the cell membrane just before virion budding, giving rise to E2-E1 heterodimer. The p62-E1 heterodimer is stable, whereas E2-E1 is unstable and dissociate at low pH. p62 is processed at the last step, presumably to avoid E1 fusion activation before its final export to cell surface. E2 C-terminus contains a transitory transmembrane that would be disrupted by palmitoylation, resulting in reorientation of the C-terminal tail from lumenal to cytoplasmic side. This step is critical since E2 C-terminus is involved in budding by interacting with capsid proteins. This release of E2 C-terminus in cytoplasm occurs lately in protein export, and precludes premature assembly of particles at the endoplasmic reticulum membrane. Functionally, acts as a viroporin that participates in virus glycoprotein processing and transport to the plasma membrane, cell permeabilization and budding of viral particles. Disrupts the calcium homeostasis of the cell, probably at the endoplasmic reticulum level. This leads to cytoplasmic calcium elevation. Because of its lipophilic properties, the 6K protein is postulated to influence the selection of lipids that interact with the transmembrane domains of the glycoproteins, which, in turn, affects the deformability of the bilayer required for the extreme curvature that occurs as budding proceeds. Present in low amount in virions, about 3% compared to viral glycoproteins. In terms of biological role, class II viral fusion protein. Fusion activity is inactive as long as E1 is bound to E2 in mature virion. After virus attachment to cell receptor LDLRAD3 and endocytosis, acidification of the endosome induce dissociation of E1/E2 heterodimer and concomitant trimerization of the E1 subunits. This E1 trimer is fusion active, and promotes release of viral nucleocapsid in cytoplasm after endosome and viral membrane fusion. Efficient fusion requires the presence of cholesterol and sphingolipid in the target membrane. This Venezuelan equine encephalitis virus (strain Mena II) (VEEV) protein is Structural polyprotein.